The following is a 288-amino-acid chain: ATP synthase gamma chain (288 aa).

It belongs to the ATPase gamma chain family. F-type ATPases have 2 components, CF(1) - the catalytic core - and CF(0) - the membrane proton channel. CF(1) has five subunits: alpha(3), beta(3), gamma(1), delta(1), epsilon(1). CF(0) has three main subunits: a, b and c.

It localises to the cell inner membrane. Produces ATP from ADP in the presence of a proton gradient across the membrane. The gamma chain is believed to be important in regulating ATPase activity and the flow of protons through the CF(0) complex. The protein is ATP synthase gamma chain of Laribacter hongkongensis (strain HLHK9).